The primary structure comprises 398 residues: 4-hydroxy-3-methylbut-2-enyl diphosphate reductase (398 aa).

Cys66 serves as a coordination point for [4Fe-4S] cluster. His96 is a binding site for (2E)-4-hydroxy-3-methylbut-2-enyl diphosphate. Position 96 (His96) interacts with dimethylallyl diphosphate. His96 is a binding site for isopentenyl diphosphate. A [4Fe-4S] cluster-binding site is contributed by Cys157. His185 provides a ligand contact to (2E)-4-hydroxy-3-methylbut-2-enyl diphosphate. His185 is a dimethylallyl diphosphate binding site. An isopentenyl diphosphate-binding site is contributed by His185. The active-site Proton donor is the Glu187. Position 250 (Thr250) interacts with (2E)-4-hydroxy-3-methylbut-2-enyl diphosphate. Cys288 lines the [4Fe-4S] cluster pocket. 4 residues coordinate (2E)-4-hydroxy-3-methylbut-2-enyl diphosphate: Ser317, Ser318, Asn319, and Ser380. Positions 317, 318, 319, and 380 each coordinate dimethylallyl diphosphate. Isopentenyl diphosphate is bound by residues Ser317, Ser318, Asn319, and Ser380.

This sequence belongs to the IspH family. [4Fe-4S] cluster serves as cofactor.

It carries out the reaction isopentenyl diphosphate + 2 oxidized [2Fe-2S]-[ferredoxin] + H2O = (2E)-4-hydroxy-3-methylbut-2-enyl diphosphate + 2 reduced [2Fe-2S]-[ferredoxin] + 2 H(+). The catalysed reaction is dimethylallyl diphosphate + 2 oxidized [2Fe-2S]-[ferredoxin] + H2O = (2E)-4-hydroxy-3-methylbut-2-enyl diphosphate + 2 reduced [2Fe-2S]-[ferredoxin] + 2 H(+). It functions in the pathway isoprenoid biosynthesis; dimethylallyl diphosphate biosynthesis; dimethylallyl diphosphate from (2E)-4-hydroxy-3-methylbutenyl diphosphate: step 1/1. It participates in isoprenoid biosynthesis; isopentenyl diphosphate biosynthesis via DXP pathway; isopentenyl diphosphate from 1-deoxy-D-xylulose 5-phosphate: step 6/6. Its function is as follows. Catalyzes the conversion of 1-hydroxy-2-methyl-2-(E)-butenyl 4-diphosphate (HMBPP) into a mixture of isopentenyl diphosphate (IPP) and dimethylallyl diphosphate (DMAPP). Acts in the terminal step of the DOXP/MEP pathway for isoprenoid precursor biosynthesis. The sequence is that of 4-hydroxy-3-methylbut-2-enyl diphosphate reductase from Prochlorococcus marinus subsp. pastoris (strain CCMP1986 / NIES-2087 / MED4).